Here is a 30-residue protein sequence, read N- to C-terminus: Snake venom serine protease (30 aa).

A Peptidase S1 domain is found at 1–30; the sequence is VIGGDECNINEHRFLVALYDPDGFLSGGIL.

It belongs to the peptidase S1 family. Snake venom subfamily. In terms of assembly, monomer. Post-translationally, N-Glycosylated. Expressed by the venom gland.

The protein resides in the secreted. Inhibited by diisopropylfluorophosphate (DFP). Snake venom serine protease that catalyzes the hydrolysis of arginine esters, kallikrein substrates Pro-Phe-Arg-MCA and Z-Phe-Arg-MCA. Cleaves kininogen analogs to release bradykinin. Induces contraction of the isolated rat uterus directly at high concentrations, but provokes more forceful contractions when injected in presence of bovine plasma. Shows capillary permeability-increasing activity and hypotensive activity on the anesthetized rat. This is Snake venom serine protease from Crotalus viridis viridis (Prairie rattlesnake).